We begin with the raw amino-acid sequence, 629 residues long: tRNA uridine 5-carboxymethylaminomethyl modification enzyme MnmG (629 aa).

FAD contacts are provided by residues 14–19 (GAGHAG), valine 126, and serine 181. 273 to 287 (GPRYCPSIEDKVVRF) provides a ligand contact to NAD(+). FAD is bound at residue glutamine 370.

This sequence belongs to the MnmG family. As to quaternary structure, homodimer. Heterotetramer of two MnmE and two MnmG subunits. The cofactor is FAD.

The protein localises to the cytoplasm. Its function is as follows. NAD-binding protein involved in the addition of a carboxymethylaminomethyl (cmnm) group at the wobble position (U34) of certain tRNAs, forming tRNA-cmnm(5)s(2)U34. The sequence is that of tRNA uridine 5-carboxymethylaminomethyl modification enzyme MnmG from Bacillus cereus (strain ATCC 14579 / DSM 31 / CCUG 7414 / JCM 2152 / NBRC 15305 / NCIMB 9373 / NCTC 2599 / NRRL B-3711).